Reading from the N-terminus, the 183-residue chain is MTKQPDDWLDEVPDNENDDDDDEIIWVSKSEIKRDAEELKRLGAELVDLGKNALDKIPLDDDLRAAIELAQRIKKEGRRRQMQLIGKMLRQRDDEPIRQALDKLKNRHNQQVALFHKLEQLRDRLIEEGDDAVPDVLNLWPQADRQQLRSLIRNAKKEKEGNKPPKSSRLIFQYLRELAESEQ.

The interval 1–23 (MTKQPDDWLDEVPDNENDDDDDE) is disordered. Over residues 7–23 (DWLDEVPDNENDDDDDE) the composition is skewed to acidic residues.

It belongs to the DarP family.

The protein localises to the cytoplasm. Its function is as follows. Member of a network of 50S ribosomal subunit biogenesis factors which assembles along the 30S-50S interface, preventing incorrect 23S rRNA structures from forming. Promotes peptidyl transferase center (PTC) maturation. In Cronobacter sakazakii (strain ATCC BAA-894) (Enterobacter sakazakii), this protein is Dual-action ribosomal maturation protein DarP.